The chain runs to 262 residues: LysM and putative peptidoglycan-binding domain-containing protein 3 (262 aa).

Residues 1–218 (MSGRIPNHGY…PYHGADWSLG (218 aa)) lie on the Extracellular side of the membrane. Positions 70-114 (ISRDICEGDTLNSIALQYCCTVADLKRANNFLNEQDFFALRTIKI) constitute a LysM domain. Residues 219 to 239 (WWTAVAIMVFVGIITPLFYFL) form a helical membrane-spanning segment. Residues 240-262 (YYEVLMKVNTSHTLNSIEKSGPS) are Cytoplasmic-facing.

The protein localises to the cell membrane. It is found in the golgi apparatus. Essential for Golgi structural integrity. The sequence is that of LysM and putative peptidoglycan-binding domain-containing protein 3 (lysmd3) from Xenopus tropicalis (Western clawed frog).